Here is a 290-residue protein sequence, read N- to C-terminus: ATP synthase gamma chain (290 aa).

It belongs to the ATPase gamma chain family. As to quaternary structure, F-type ATPases have 2 components, CF(1) - the catalytic core - and CF(0) - the membrane proton channel. CF(1) has five subunits: alpha(3), beta(3), gamma(1), delta(1), epsilon(1). CF(0) has three main subunits: a, b and c.

Its subcellular location is the cell membrane. Its function is as follows. Produces ATP from ADP in the presence of a proton gradient across the membrane. The gamma chain is believed to be important in regulating ATPase activity and the flow of protons through the CF(0) complex. This Akkermansia muciniphila (strain ATCC BAA-835 / DSM 22959 / JCM 33894 / BCRC 81048 / CCUG 64013 / CIP 107961 / Muc) protein is ATP synthase gamma chain.